Consider the following 185-residue polypeptide: Large ribosomal subunit protein uL5 (185 aa).

This sequence belongs to the universal ribosomal protein uL5 family. Part of the 50S ribosomal subunit; part of the 5S rRNA/L5/L18/L25 subcomplex. Contacts the 5S rRNA and the P site tRNA. Forms a bridge to the 30S subunit in the 70S ribosome.

Its function is as follows. This is one of the proteins that bind and probably mediate the attachment of the 5S RNA into the large ribosomal subunit, where it forms part of the central protuberance. In the 70S ribosome it contacts protein S13 of the 30S subunit (bridge B1b), connecting the 2 subunits; this bridge is implicated in subunit movement. Contacts the P site tRNA; the 5S rRNA and some of its associated proteins might help stabilize positioning of ribosome-bound tRNAs. The polypeptide is Large ribosomal subunit protein uL5 (Bradyrhizobium diazoefficiens (strain JCM 10833 / BCRC 13528 / IAM 13628 / NBRC 14792 / USDA 110)).